Reading from the N-terminus, the 882-residue chain is Cadherin-1 (882 aa).

The N-terminal stretch at 1–23 (MGPWSRSLSALCCCCRCNPWLCR) is a signal peptide. Residues 24–154 (EPEPCIPGFG…PHHGLRRQKR (131 aa)) constitute a propeptide that is removed on maturation. Positions 117-137 (EVSAHHHHHHSHHDSPSGTQT) are disordered. Cadherin domains follow at residues 154–262 (RDWV…KPQF), 263–375 (TQEV…APRF), 376–486 (NPTT…APIF), 487–595 (VPPQ…GPVP), and 594–702 (VPEP…RPAE). The Extracellular segment spans residues 155–709 (DWVIPPISCP…PAEAGLQVPA (555 aa)). O-linked (Man...) serine glycosylation occurs at S280. T285, T358, T470, T472, and T509 each carry an O-linked (Man...) threonine glycan. The N-linked (GlcNAc...) asparagine glycan is linked to N558. 3 O-linked (Man...) threonine glycosylation sites follow: T576, T578, and T580. The N-linked (GlcNAc...) asparagine glycan is linked to N637. The helical transmembrane segment at 710 to 730 (ILGILGGILAFLILILLLLLL) threads the bilayer. Over 731 to 882 (VRRRRVVKEP…ADMYGGGEDD (152 aa)) the chain is Cytoplasmic. Positions 747–767 (DTRDNVYYYDEEGGGEEDQDF) are disordered. 3 positions are modified to phosphotyrosine; by SRC: Y753, Y754, and Y755. The segment covering 755-767 (YDEEGGGEEDQDF) has biased composition (acidic residues). The tract at residues 758–769 (EGGGEEDQDFDL) is required for binding CTNND1 and PSEN1. Phosphoserine occurs at positions 770, 793, 838, 840, and 846. The required for binding alpha, beta and gamma catenins stretch occupies residues 811-882 (IDENLKAADS…ADMYGGGEDD (72 aa)).

In terms of assembly, homodimer; disulfide-linked. Component of an E-cadherin/ catenin adhesion complex composed of at least E-cadherin/CDH1, beta-catenin/CTNNB1 or gamma-catenin/JUP, and potentially alpha-catenin/CTNNA1; the complex is located to adherens junctions. Found in a complex composed of CDH1, RAP1A and PKP3; PKP3 acts as a scaffold protein within the complex, the complex is required for CDH1 localization to mature desmosome cell junctions. Interacts with the TRPV4 and CTNNB1 complex. Interacts with CTNND1. The stable association of CTNNA1 is controversial as CTNNA1 was shown not to bind to F-actin when assembled in the complex. Alternatively, the CTNNA1-containing complex may be linked to F-actin by other proteins such as LIMA1. Interaction with PSEN1, cleaves CDH1 resulting in the disassociation of cadherin-based adherens junctions (CAJs). Interacts with AJAP1 and DLGAP5. Interacts with TBC1D2. Interacts with CAV1. Interacts with PIP5K1C. Interacts with RAB8B. Interacts with DDR1; this stabilizes CDH1 at the cell surface and inhibits its internalization. Interacts with RAPGEF2. Interacts with KLRG1. Forms a ternary complex composed of ADAM10, CADH1 and EPHA4; within the complex, CADH1 is cleaved by ADAM10 which disrupts adherens junctions. Interacts with SPEF1. Interacts with CTNNB1 and PKP2. Interacts with AMOTL2; the interaction may facilitate binding of radial actin fibers to cell junction complexes. Interacts with DSG3; the interaction is required for CDH1 localization to developing adherens junctions. During apoptosis or with calcium influx, cleaved by a membrane-bound metalloproteinase (ADAM10), PS1/gamma-secretase and caspase-3. Processing by the metalloproteinase, induced by calcium influx, causes disruption of cell-cell adhesion and the subsequent release of beta-catenin into the cytoplasm. The residual membrane-tethered cleavage product is rapidly degraded via an intracellular proteolytic pathway. Cleavage by caspase-3 releases the cytoplasmic tail resulting in disintegration of the actin microfilament system. The gamma-secretase-mediated cleavage promotes disassembly of adherens junctions. During development of the cochlear organ of Corti, cleavage by ADAM10 at adherens junctions promotes pillar cell separation. Post-translationally, N-glycosylation at Asn-637 is essential for expression, folding and trafficking. Addition of bisecting N-acetylglucosamine by MGAT3 modulates its cell membrane location. In terms of processing, ubiquitinated by a SCF complex containing SKP2, which requires prior phosphorylation by CK1/CSNK1A1. Ubiquitinated by CBLL1/HAKAI, requires prior phosphorylation at Tyr-754. O-glycosylated. O-manosylated by TMTC1, TMTC2, TMTC3 or TMTC4. Thr-285 and Thr-509 are O-mannosylated by TMTC2 or TMTC4 but not TMTC1 or TMTC3.

The protein localises to the cell junction. It is found in the adherens junction. Its subcellular location is the cell membrane. The protein resides in the endosome. It localises to the golgi apparatus. The protein localises to the trans-Golgi network. It is found in the cytoplasm. Its subcellular location is the desmosome. Its function is as follows. Cadherins are calcium-dependent cell adhesion proteins. They preferentially interact with themselves in a homophilic manner in connecting cells; cadherins may thus contribute to the sorting of heterogeneous cell types. CDH1 is involved in mechanisms regulating cell-cell adhesions, mobility and proliferation of epithelial cells. Promotes organization of radial actin fiber structure and cellular response to contractile forces, via its interaction with AMOTL2 which facilitates anchoring of radial actin fibers to CDH1 junction complexes at the cell membrane. Plays a role in the early stages of desmosome cell-cell junction formation via facilitating the recruitment of DSG2 and DSP to desmosome plaques. Has a potent invasive suppressor role. It is a ligand for integrin alpha-E/beta-7. E-Cad/CTF2 promotes non-amyloidogenic degradation of Abeta precursors. Has a strong inhibitory effect on APP C99 and C83 production. The sequence is that of Cadherin-1 (CDH1) from Bos taurus (Bovine).